The sequence spans 429 residues: Alanine aminotransferase (429 aa).

Glycine 65 and asparagine 204 together coordinate L-alanine. An N6-(pyridoxal phosphate)lysine modification is found at lysine 265. Residue arginine 403 participates in L-alanine binding.

This sequence belongs to the class-I pyridoxal-phosphate-dependent aminotransferase family. Homodimer. Requires pyridoxal 5'-phosphate as cofactor.

Its subcellular location is the cytoplasm. It carries out the reaction L-alanine + 2-oxoglutarate = pyruvate + L-glutamate. The chain is Alanine aminotransferase (aspC) from Mycobacterium bovis (strain ATCC BAA-935 / AF2122/97).